A 255-amino-acid chain; its full sequence is NAD kinase (255 aa).

Residue Asp-44 is the Proton acceptor of the active site. Residues 44-45 (DG), His-49, 114-115 (NE), Asp-144, Ala-152, 155-160 (SAYNLS), and Gln-216 each bind NAD(+).

Belongs to the NAD kinase family. A divalent metal cation serves as cofactor.

It is found in the cytoplasm. The catalysed reaction is NAD(+) + ATP = ADP + NADP(+) + H(+). Involved in the regulation of the intracellular balance of NAD and NADP, and is a key enzyme in the biosynthesis of NADP. Catalyzes specifically the phosphorylation on 2'-hydroxyl of the adenosine moiety of NAD to yield NADP. The polypeptide is NAD kinase (Rickettsia akari (strain Hartford)).